An 858-amino-acid polypeptide reads, in one-letter code: Myosin-K heavy chain (858 aa).

In terms of domain architecture, Myosin motor spans Ser7–Met820. An ATP-binding site is contributed by Gly100–Thr107. Positions Ser121–Thr265 are disordered. 2 stretches are compositionally biased toward gly residues: residues Ser126–Gly139 and Arg157–Gly182. A compositionally biased stretch (pro residues) spans Gly183–Gly228. Over residues Arg233 to Gly245 the composition is skewed to gly residues. Residues Pro712–Asp722 form an actin-binding region. The tail stretch occupies residues Gln821–Gln858.

The protein belongs to the TRAFAC class myosin-kinesin ATPase superfamily. Myosin family.

The protein resides in the cytoplasm. Its function is as follows. Myosins are actin-based motor molecules with ATPase activity. Involved in phagocytosis and motility, and in the maintenance and dynamics of cell cortex. The polypeptide is Myosin-K heavy chain (myoK) (Dictyostelium discoideum (Social amoeba)).